A 135-amino-acid polypeptide reads, in one-letter code: T-cell receptor beta chain V region 3H.25 (135 aa).

A signal peptide spans 1–20 (MATRLLCYTVLCLLGARILN). The tract at residues 21–115 (SKVIQTPRYL…SALYLCASSL (95 aa)) is v segment. Cysteines 42 and 111 form a disulfide. The segment at 116–118 (FGT) is d segment. Residues 119-135 (SDYTFGSGTRLLVIGKA) are j segment.

The sequence is that of T-cell receptor beta chain V region 3H.25 from Mus musculus (Mouse).